The following is a 149-amino-acid chain: D-aminoacyl-tRNA deacylase (149 aa).

The Gly-cisPro motif, important for rejection of L-amino acids signature appears at 141-142; the sequence is GP.

It belongs to the DTD family. In terms of assembly, homodimer.

It is found in the cytoplasm. It catalyses the reaction glycyl-tRNA(Ala) + H2O = tRNA(Ala) + glycine + H(+). The catalysed reaction is a D-aminoacyl-tRNA + H2O = a tRNA + a D-alpha-amino acid + H(+). In terms of biological role, an aminoacyl-tRNA editing enzyme that deacylates mischarged D-aminoacyl-tRNAs. Also deacylates mischarged glycyl-tRNA(Ala), protecting cells against glycine mischarging by AlaRS. Acts via tRNA-based rather than protein-based catalysis; rejects L-amino acids rather than detecting D-amino acids in the active site. By recycling D-aminoacyl-tRNA to D-amino acids and free tRNA molecules, this enzyme counteracts the toxicity associated with the formation of D-aminoacyl-tRNA entities in vivo and helps enforce protein L-homochirality. This Streptomyces griseus subsp. griseus (strain JCM 4626 / CBS 651.72 / NBRC 13350 / KCC S-0626 / ISP 5235) protein is D-aminoacyl-tRNA deacylase.